The primary structure comprises 534 residues: Probable bifunctional tRNA threonylcarbamoyladenosine biosynthesis protein (534 aa).

The interval 1-324 (MICLGIEGTA…YRTDQVEVTW (324 aa)) is kae1. Positions 108, 112, and 129 each coordinate Fe cation. L-threonylcarbamoyladenylate contacts are provided by residues 129 to 133 (YTSGG), Asp-161, Gly-174, Glu-178, and Asn-258. Asp-286 lines the Fe cation pocket. The Protein kinase domain occupies 335 to 534 (LPDNIKEKGA…DEIEKRGRYL (200 aa)). ATP-binding positions include 340 to 348 (KEKGAEADI) and Lys-361. Asp-455 acts as the Proton acceptor; for kinase activity in catalysis.

It in the N-terminal section; belongs to the KAE1 / TsaD family. The protein in the C-terminal section; belongs to the protein kinase superfamily. Tyr protein kinase family. BUD32 subfamily. Component of the KEOPS complex that consists of Kae1, Bud32, Cgi121 and Pcc1; the whole complex dimerizes. Requires Fe(2+) as cofactor.

It is found in the cytoplasm. The enzyme catalyses L-seryl-[protein] + ATP = O-phospho-L-seryl-[protein] + ADP + H(+). The catalysed reaction is L-threonyl-[protein] + ATP = O-phospho-L-threonyl-[protein] + ADP + H(+). It carries out the reaction L-threonylcarbamoyladenylate + adenosine(37) in tRNA = N(6)-L-threonylcarbamoyladenosine(37) in tRNA + AMP + H(+). In terms of biological role, required for the formation of a threonylcarbamoyl group on adenosine at position 37 (t(6)A37) in tRNAs that read codons beginning with adenine. Is a component of the KEOPS complex that is probably involved in the transfer of the threonylcarbamoyl moiety of threonylcarbamoyl-AMP (TC-AMP) to the N6 group of A37. The Kae1 domain likely plays a direct catalytic role in this reaction. The Bud32 domain probably displays kinase activity that regulates Kae1 function. The sequence is that of Probable bifunctional tRNA threonylcarbamoyladenosine biosynthesis protein from Methanosphaera stadtmanae (strain ATCC 43021 / DSM 3091 / JCM 11832 / MCB-3).